The chain runs to 89 residues: MGTKREAILKVLENLTPEELKKFKMKLGTVPLREGFERIPRGALGQLDIVDLTDKLVASYYEDYAAELVVAVLRDMRMLEEAARLQRAA.

In terms of domain architecture, Pyrin spans 1–89 (MGTKREAILK…EEAARLQRAA (89 aa)).

In terms of assembly, interacts with PYCARD/ASC (via pyrin domain). Post-translationally, phosphorylated. Predominantly expressed in monocytes, macrophages and granulocytes.

It is found in the cytoplasm. In terms of biological role, associates with PYCARD/ASC and modulates its ability to collaborate with MEFV/pyrin and NLRP3/cryopyrin in NF-kappa-B and pro-caspase-1 activation. Suppresses kinase activity of NF-kappa-B inhibitor kinase (IKK) complex, expression of NF-kappa-B inducible genes and inhibits NF-kappa-B activation by cytokines and LPS. The polypeptide is Pyrin domain-containing protein 1 (Homo sapiens (Human)).